The following is a 1088-amino-acid chain: uncharacterized protein (1088 aa).

Phosphoserine is present on S299. The tract at residues 954-980 (PRSSVATTASTESSEQGPKMKRMARRK) is disordered. Low complexity predominate over residues 956–968 (SSVATTASTESSE). S984 carries the post-translational modification Phosphoserine. T1013 carries the post-translational modification Phosphothreonine. Positions 1063 to 1088 (MKVTDKAKDEDIDPMDPMSPLNKDVS) are disordered. A Phosphoserine modification is found at S1081.

This is an uncharacterized protein from Saccharomyces cerevisiae (strain ATCC 204508 / S288c) (Baker's yeast).